We begin with the raw amino-acid sequence, 110 residues long: Nucleoid-associated protein NFA_2940 (110 aa).

This sequence belongs to the YbaB/EbfC family. As to quaternary structure, homodimer.

It localises to the cytoplasm. Its subcellular location is the nucleoid. Its function is as follows. Binds to DNA and alters its conformation. May be involved in regulation of gene expression, nucleoid organization and DNA protection. This Nocardia farcinica (strain IFM 10152) protein is Nucleoid-associated protein NFA_2940.